The primary structure comprises 391 residues: uncharacterized protein (391 aa).

A run of 12 helical transmembrane segments spans residues 7-27 (FILVLLVSISGFSQGMLLPVI), 39-59 (AINGLHATGLYIGVLLASPFM), 66-88 (LGFKPLIVMGGSIVILSLFGFIW), 92-111 (VWVWFLLRLFIGIGDHMLHF), 131-151 (SIYGLSFGLGFAAGPFMVPLV), 156-176 (SLPFIVSGCISLFAWLFVFFL), 197-217 (FYQAMLFGWVAFMPTFGYGFL), 239-259 (VAIILPAFAIGSIIFQFPLGI), 269-289 (VLLVILLTGALCFFIAGVFPS), 292-312 (VIGGCFFIAGMAVGSTFTLGI), 329-349 (LLCGITFSLGSILGPVAGGWY), and 356-376 (ANLFYFITLTLSSVWLALVLG).

This sequence belongs to the major facilitator superfamily.

It localises to the cell membrane. This is an uncharacterized protein from Bacillus subtilis (strain 168).